The following is a 431-amino-acid chain: Tol-Pal system protein TolB (431 aa).

Residues 1 to 26 form the signal peptide; sequence MSLMTKLGFRALVASCLIAAGGAANA. Residues 411-431 are disordered; it reads PQILSVQGGSVREPSWGPFMQ.

It belongs to the TolB family. In terms of assembly, the Tol-Pal system is composed of five core proteins: the inner membrane proteins TolA, TolQ and TolR, the periplasmic protein TolB and the outer membrane protein Pal. They form a network linking the inner and outer membranes and the peptidoglycan layer.

Its subcellular location is the periplasm. Functionally, part of the Tol-Pal system, which plays a role in outer membrane invagination during cell division and is important for maintaining outer membrane integrity. In Burkholderia vietnamiensis (strain G4 / LMG 22486) (Burkholderia cepacia (strain R1808)), this protein is Tol-Pal system protein TolB.